The primary structure comprises 375 residues: Alcohol dehydrogenase 1 (375 aa).

Serine 1 carries the N-acetylserine modification. Zn(2+) contacts are provided by cysteine 46, histidine 67, cysteine 97, cysteine 100, cysteine 103, cysteine 111, and cysteine 174. Residues 199 to 204, aspartate 223, lysine 228, 293 to 295, and arginine 370 each bind NAD(+); these read GLGGVG and VGV.

It belongs to the zinc-containing alcohol dehydrogenase family. Class-I subfamily. As to quaternary structure, homodimer. Zn(2+) is required as a cofactor.

It is found in the cytoplasm. The enzyme catalyses a primary alcohol + NAD(+) = an aldehyde + NADH + H(+). It carries out the reaction a secondary alcohol + NAD(+) = a ketone + NADH + H(+). The chain is Alcohol dehydrogenase 1 from Naja naja (Indian cobra).